Here is a 55-residue protein sequence, read N- to C-terminus: ATP synthase protein 8 (55 aa).

A helical transmembrane segment spans residues 6–26 (PHPWFAILVFSWIFFLVILPK).

This sequence belongs to the ATPase protein 8 family. In terms of assembly, F-type ATPases have 2 components, CF(1) - the catalytic core - and CF(0) - the membrane proton channel.

It localises to the mitochondrion membrane. Its function is as follows. Mitochondrial membrane ATP synthase (F(1)F(0) ATP synthase or Complex V) produces ATP from ADP in the presence of a proton gradient across the membrane which is generated by electron transport complexes of the respiratory chain. F-type ATPases consist of two structural domains, F(1) - containing the extramembraneous catalytic core and F(0) - containing the membrane proton channel, linked together by a central stalk and a peripheral stalk. During catalysis, ATP synthesis in the catalytic domain of F(1) is coupled via a rotary mechanism of the central stalk subunits to proton translocation. Part of the complex F(0) domain. Minor subunit located with subunit a in the membrane. The polypeptide is ATP synthase protein 8 (MT-ATP8) (Squalus acanthias (Spiny dogfish)).